A 579-amino-acid polypeptide reads, in one-letter code: 2-isopropylmalate synthase (579 aa).

The 276-residue stretch at 33–308 (PRWLSTDLRD…DPGIDFSDIN (276 aa)) folds into the Pyruvate carboxyltransferase domain. Residues D42, H247, H249, and N283 each contribute to the Mg(2+) site. Residues 450 to 579 (SSDLPVPLAS…IVAPLVAAGR (130 aa)) are regulatory domain.

The protein belongs to the alpha-IPM synthase/homocitrate synthase family. LeuA type 2 subfamily. Homodimer. Mg(2+) serves as cofactor.

The protein resides in the cytoplasm. It carries out the reaction 3-methyl-2-oxobutanoate + acetyl-CoA + H2O = (2S)-2-isopropylmalate + CoA + H(+). The protein operates within amino-acid biosynthesis; L-leucine biosynthesis; L-leucine from 3-methyl-2-oxobutanoate: step 1/4. Functionally, catalyzes the condensation of the acetyl group of acetyl-CoA with 3-methyl-2-oxobutanoate (2-ketoisovalerate) to form 3-carboxy-3-hydroxy-4-methylpentanoate (2-isopropylmalate). The sequence is that of 2-isopropylmalate synthase from Streptosporangium roseum (strain ATCC 12428 / DSM 43021 / JCM 3005 / KCTC 9067 / NCIMB 10171 / NRRL 2505 / NI 9100).